We begin with the raw amino-acid sequence, 479 residues long: Endosomal/lysosomal proton channel TMEM175 (479 aa).

A disordered region spans residues 1–26 (MSGPQAPEPTLEGQADASAGSPDEDA). Over 1–33 (MSGPQAPEPTLEGQADASAGSPDEDAAEGIQHS) the chain is Cytoplasmic. The helical transmembrane segment at 34 to 56 (HRMLSFSDALLSIIATVMEFDKS) threads the bilayer. The RxxxFSD motif 1 motif lies at 35-41 (RMLSFSD). Positions 52–58 (EFDKSVQ) are short helix H2-1. The Lumenal segment spans residues 57 to 64 (VQRLLATR). The chain crosses the membrane as a helical span at residues 65 to 87 (IAVYLMTFLIVTVAWAAHTRLFQ). Residues 88–93 (VVGKID) are Cytoplasmic-facing. A helical membrane pass occupies residues 94 to 103 (DTLALLNLFS). Residues 104 to 113 (LMVTFPEVPL) are Lumenal-facing. Residues 114–135 (GIFLFCMCVIAIGAVQALIVLY) traverse the membrane as a helical segment. At 136 to 159 (AFHFPHLLSPQIERSAHRGLYRQR) the chain is on the cytoplasmic side. A helical transmembrane segment spans residues 160–180 (VLGIIVRGPALCLAAAGFSLF). The Lumenal segment spans residues 181 to 185 (FYPAS). A helical transmembrane segment spans residues 186-205 (YLLMAMVIVLPHVSKAAGWC). The Cytoplasmic portion of the chain corresponds to 206–232 (RAQLVGPREPPAHSVEVFTFDLHEPLS). The helical transmembrane segment at 233–257 (KERVEAFSDGVYAIVATLLILDICE) threads the bilayer. Residues 235-241 (RVEAFSD) carry the RxxxFSD motif 2 motif. Residues 258–284 (DNVPDAKDVKEKFQGSLVAALGESGPH) are Lumenal-facing. Residues 263-271 (AKDVKEKFQ) are short helix H1-2. Residues 273–279 (SLVAALG) form a short helix H2-2 region. A helical transmembrane segment spans residues 285–307 (FLAYFGSFATVGLLWFAHHSLFL). Residues 308 to 313 (HIRRAT) are Cytoplasmic-facing. The chain crosses the membrane as a helical span at residues 314–335 (QPMGLLNTLSLAFVGGLPLAYQ). Topologically, residues 336 to 350 (QTSAFTKQPRDELES) are lumenal. A helical membrane pass occupies residues 351–371 (VRISCAIIFLASIFQFAIWTT). Residues 372 to 391 (ALLQEGETLQPSARFGGREH) lie on the Cytoplasmic side of the membrane. The helical transmembrane segment at 392 to 415 (AFMFAKLALYPCASLLAFACTCVL) threads the bilayer. Residues 416-417 (SS) lie on the Lumenal side of the membrane. Residues 418 to 444 (FSTAIFHAMQIAVPFAFLLLRLLVRLA) form a helical membrane-spanning segment. Residues 445 to 479 (LAGLRALRGLVGPVLARPAPGAADEAQSPLLPAPC) lie on the Cytoplasmic side of the membrane.

The protein belongs to the TMEM175 family. Homodimer. Interacts with AKT (AKT1, AKT2 or AKT3); leading to formation of the lysoK(GF) complex, which activates the channel. Interacts with LAMP1; inhibiting the proton channel activity of TMEM175. Interacts with LAMP2; inhibiting the proton channel activity of TMEM175.

Its subcellular location is the endosome membrane. It is found in the lysosome membrane. The enzyme catalyses H(+)(in) = H(+)(out). It catalyses the reaction K(+)(in) = K(+)(out). With respect to regulation, active at low pH (under pH 4.6): proton channel activity is activated by luminal side protons. Polyunsaturated fatty acids, such as arachidonic acid, also activate the channel activity. Proton channel activity is directly inhibited by LAMP1 or LAMP2, facilitating lysosomal acidification. Channel activity is activated following interaction with AKT (AKT1, AKT2 or AKT3): interaction promotes activation from closed to an open state. Activation by AKT is independent of AKT serine/threonine-protein kinase activity. Its function is as follows. Proton-activated proton channel that catalyzes proton efflux from endosomes and lysosomes to maintain a steady-state pH. Activated at low pH (under pH 4.6) by luminal side protons: selectively mediates lysosomal proton release from lysosomes, eliciting a proton leak that balances V-ATPase activity to maintain pH homeostasis. Regulation of lumenal pH stability is required for autophagosome-lysosome fusion. Also acts as a potassium channel at higher pH, regulating potassium conductance in endosomes and lysosomes. Constitutes the pore-forming subunit of the lysoK(GF) complex, a complex activated by extracellular growth factors. The lysoK(GF) complex is composed of TMEM175 and AKT (AKT1, AKT2 or AKT3), a major target of growth factor receptors: in the complex, TMEM175 channel is opened by conformational changes by AKT, leading to its activation. The lysoK(GF) complex is required to protect neurons against stress-induced damage. This chain is Endosomal/lysosomal proton channel TMEM175, found in Bos taurus (Bovine).